Here is a 290-residue protein sequence, read N- to C-terminus: GTPase Era (290 aa).

In terms of domain architecture, Era-type G spans 2-169 (KSGFVSIIGR…KDKIYENLQE (168 aa)). The G1 stretch occupies residues 10 to 17 (GRPSTGKS). A GTP-binding site is contributed by 10–17 (GRPSTGKS). The segment at 36 to 40 (QTTRN) is G2. The interval 57 to 60 (DTPG) is G3. Residues 57–61 (DTPGF) and 119–122 (NKID) each bind GTP. The interval 119-122 (NKID) is G4. The tract at residues 148 to 150 (ISA) is G5. A KH type-2 domain is found at 200-276 (LKEELPYSLY…DLFLQVKLRK (77 aa)).

It belongs to the TRAFAC class TrmE-Era-EngA-EngB-Septin-like GTPase superfamily. Era GTPase family. In terms of assembly, monomer.

Its subcellular location is the cytoplasm. It localises to the cell inner membrane. In terms of biological role, an essential GTPase that binds both GDP and GTP, with rapid nucleotide exchange. Plays a role in 16S rRNA processing and 30S ribosomal subunit biogenesis and possibly also in cell cycle regulation and energy metabolism. The chain is GTPase Era from Borrelia turicatae (strain 91E135).